Consider the following 390-residue polypeptide: Probable protein phosphatase 2C 30 (390 aa).

Positions 1–10 are enriched in polar residues; that stretch reads MQLSKNPIKQ. 2 disordered regions span residues 1–20 and 40–85; these read MQLSKNPIKQTRNREKNYTD and PPLV…DSET. Positions 44 to 61 are enriched in low complexity; the sequence is FSPTSVKTPLSSPRSSPP. A PPM-type phosphatase domain is found at 128–385; sequence YYSVYCKRGR…DDISLIIIQL (258 aa). The Mn(2+) site is built by aspartate 166, glycine 167, aspartate 331, and aspartate 376.

Belongs to the PP2C family. Mg(2+) is required as a cofactor. Requires Mn(2+) as cofactor.

It carries out the reaction O-phospho-L-seryl-[protein] + H2O = L-seryl-[protein] + phosphate. The enzyme catalyses O-phospho-L-threonyl-[protein] + H2O = L-threonyl-[protein] + phosphate. This Arabidopsis thaliana (Mouse-ear cress) protein is Probable protein phosphatase 2C 30 (PP2C5).